The sequence spans 416 residues: Gamma-glutamyl phosphate reductase (416 aa).

The protein belongs to the gamma-glutamyl phosphate reductase family.

It localises to the cytoplasm. The enzyme catalyses L-glutamate 5-semialdehyde + phosphate + NADP(+) = L-glutamyl 5-phosphate + NADPH + H(+). The protein operates within amino-acid biosynthesis; L-proline biosynthesis; L-glutamate 5-semialdehyde from L-glutamate: step 2/2. Functionally, catalyzes the NADPH-dependent reduction of L-glutamate 5-phosphate into L-glutamate 5-semialdehyde and phosphate. The product spontaneously undergoes cyclization to form 1-pyrroline-5-carboxylate. The protein is Gamma-glutamyl phosphate reductase of Salmonella paratyphi C (strain RKS4594).